The following is a 208-amino-acid chain: Imidazole glycerol phosphate synthase subunit HisH (208 aa).

Positions 1–206 (MIVIIDYDTG…KEVTYSCKSS (206 aa)) constitute a Glutamine amidotransferase type-1 domain. The Nucleophile role is filled by C79. Active-site residues include H181 and E183.

Heterodimer of HisH and HisF.

It localises to the cytoplasm. It catalyses the reaction 5-[(5-phospho-1-deoxy-D-ribulos-1-ylimino)methylamino]-1-(5-phospho-beta-D-ribosyl)imidazole-4-carboxamide + L-glutamine = D-erythro-1-(imidazol-4-yl)glycerol 3-phosphate + 5-amino-1-(5-phospho-beta-D-ribosyl)imidazole-4-carboxamide + L-glutamate + H(+). It carries out the reaction L-glutamine + H2O = L-glutamate + NH4(+). Its pathway is amino-acid biosynthesis; L-histidine biosynthesis; L-histidine from 5-phospho-alpha-D-ribose 1-diphosphate: step 5/9. Functionally, IGPS catalyzes the conversion of PRFAR and glutamine to IGP, AICAR and glutamate. The HisH subunit catalyzes the hydrolysis of glutamine to glutamate and ammonia as part of the synthesis of IGP and AICAR. The resulting ammonia molecule is channeled to the active site of HisF. The chain is Imidazole glycerol phosphate synthase subunit HisH from Listeria monocytogenes serotype 4a (strain HCC23).